A 223-amino-acid chain; its full sequence is uncharacterized protein (223 aa).

2 consecutive transmembrane segments (helical) span residues 1-21 (MLIIGLCVVSMLLLSSNTFYL) and 45-65 (ILIGFVLALIGFIFCSGTSLI).

The protein resides in the cell membrane. This is an uncharacterized protein from Haemophilus influenzae (strain ATCC 51907 / DSM 11121 / KW20 / Rd).